A 213-amino-acid chain; its full sequence is Phosphatidylethanolamine N-methyltransferase A (213 aa).

At 1–21 (MIVEHAIDYIDYLMNYVDFTE) the chain is on the lumenal side. The helical intramembrane region spans 22–42 (KYFLLTIACVVFNPTWWNITA). Over 43–54 (RMEYKTKFMTKI) the chain is Lumenal. The helical transmembrane segment at 55-75 (CGSKENGCYLLAFLIFSLGIL) threads the bilayer. Residues 76–102 (RDWLFSEALIRQPIFQEFDRFEVEVLS) are Cytoplasmic-facing. The helical transmembrane segment at 103-123 (YILYGFGGILVLAAYLKLGIT) threads the bilayer. 107-109 (GFG) provides a ligand contact to S-adenosyl-L-methionine. The Lumenal segment spans residues 124 to 166 (GTYLGDYFGILMKERVTGFPFNVMNNPMYNGSVMLFIAHALSY). Residues 167 to 187 (KSVAGLVLSFVVYVVYKFALI) traverse the membrane as a helical segment. Residues 188-213 (FEESFTNYIYSTAAANAAKKNKSKSK) lie on the Cytoplasmic side of the membrane. 189–190 (EE) is a binding site for S-adenosyl-L-methionine.

Belongs to the class VI-like SAM-binding methyltransferase superfamily. PEMT/PEM2 methyltransferase family.

It localises to the endoplasmic reticulum membrane. It is found in the mitochondrion membrane. The enzyme catalyses a 1,2-diacyl-sn-glycero-3-phospho-N-methylethanolamine + S-adenosyl-L-methionine = a 1,2-diacyl-sn-glycero-3-phospho-N,N-dimethylethanolamine + S-adenosyl-L-homocysteine + H(+). The catalysed reaction is a 1,2-diacyl-sn-glycero-3-phospho-N,N-dimethylethanolamine + S-adenosyl-L-methionine = a 1,2-diacyl-sn-glycero-3-phosphocholine + S-adenosyl-L-homocysteine + H(+). It carries out the reaction a 1,2-diacyl-sn-glycero-3-phosphoethanolamine + S-adenosyl-L-methionine = a 1,2-diacyl-sn-glycero-3-phospho-N-methylethanolamine + S-adenosyl-L-homocysteine + H(+). Its pathway is phospholipid metabolism; phosphatidylcholine biosynthesis. Catalyzes the three sequential steps of the methylation pathway of phosphatidylcholine biosynthesis, the SAM-dependent methylation of phosphatidylethanolamine (PE) to phosphatidylmonomethylethanolamine (PMME), PMME to phosphatidyldimethylethanolamine (PDME), and PDME to phosphatidylcholine (PC). This chain is Phosphatidylethanolamine N-methyltransferase A (pemtA), found in Dictyostelium discoideum (Social amoeba).